The following is a 56-amino-acid chain: Ovomucoid (56 aa).

The Kazal-like domain maps to 6 to 56 (VDCSEYPKPACMSEYRPLCGSDNKTYVNKCNFCNAVVESNGTLTLSHFGKC). Cystine bridges form between C8/C38, C16/C35, and C24/C56. An N-linked (GlcNAc...) asparagine glycan is attached at N45.

It localises to the secreted. In Colinus virginianus (Northern bobwhite), this protein is Ovomucoid.